The following is an 816-amino-acid chain: Subtilisin-like protease SBT2.6 (816 aa).

Residues 1 to 19 (MDIGCKVLVFFTCFLTVTA) form the signal peptide. Residues 20 to 126 (EIYIVTMEGE…VDRDWKVRKL (107 aa)) constitute a propeptide, activation peptide. An Inhibitor I9 domain is found at 22–124 (YIVTMEGEPI…KSVDRDWKVR (103 aa)). The Peptidase S8 domain maps to 120 to 672 (DWKVRKLTTH…SGHVNPSAAL (553 aa)). Residues D160 and H235 each act as charge relay system in the active site. Positions 418–492 (DCQKPEVLNK…SCIPGILITD (75 aa)) constitute a PA domain. N-linked (GlcNAc...) asparagine glycans are attached at residues N504 and N578. The active-site Charge relay system is S597. N702 carries N-linked (GlcNAc...) asparagine glycosylation.

It belongs to the peptidase S8 family.

It is found in the secreted. This Arabidopsis thaliana (Mouse-ear cress) protein is Subtilisin-like protease SBT2.6.